A 348-amino-acid chain; its full sequence is Protein RecA (348 aa).

Residue G65–T72 coordinates ATP. A disordered region spans residues Q326–E348. Over residues S336–E348 the composition is skewed to acidic residues.

The protein belongs to the RecA family.

The protein localises to the cytoplasm. Can catalyze the hydrolysis of ATP in the presence of single-stranded DNA, the ATP-dependent uptake of single-stranded DNA by duplex DNA, and the ATP-dependent hybridization of homologous single-stranded DNAs. It interacts with LexA causing its activation and leading to its autocatalytic cleavage. The chain is Protein RecA from Campylobacter hominis (strain ATCC BAA-381 / DSM 21671 / CCUG 45161 / LMG 19568 / NCTC 13146 / CH001A).